A 344-amino-acid chain; its full sequence is Methylthioribose-1-phosphate isomerase (344 aa).

Residues 55 to 57, Arg98, and Gln202 contribute to the substrate site; that span reads RGA. Asp243 acts as the Proton donor in catalysis. A substrate-binding site is contributed by 253–254; the sequence is NK.

Belongs to the eIF-2B alpha/beta/delta subunits family. MtnA subfamily.

The catalysed reaction is 5-(methylsulfanyl)-alpha-D-ribose 1-phosphate = 5-(methylsulfanyl)-D-ribulose 1-phosphate. It functions in the pathway amino-acid biosynthesis; L-methionine biosynthesis via salvage pathway; L-methionine from S-methyl-5-thio-alpha-D-ribose 1-phosphate: step 1/6. In terms of biological role, catalyzes the interconversion of methylthioribose-1-phosphate (MTR-1-P) into methylthioribulose-1-phosphate (MTRu-1-P). In Gemmatimonas aurantiaca (strain DSM 14586 / JCM 11422 / NBRC 100505 / T-27), this protein is Methylthioribose-1-phosphate isomerase.